Here is a 639-residue protein sequence, read N- to C-terminus: Coiled-coil domain-containing protein 93 homolog (639 aa).

The tract at residues 250 to 275 (KLESQLSGKDGSGKDTTEAEREEEEK) is disordered. Over residues 260-275 (GSGKDTTEAEREEEEK) the composition is skewed to basic and acidic residues. A coiled-coil region spans residues 332-492 (AEKLHRQKIT…KNRDISLIQR (161 aa)).

This sequence belongs to the CCDC93 family.

This chain is Coiled-coil domain-containing protein 93 homolog, found in Dictyostelium discoideum (Social amoeba).